A 128-amino-acid chain; its full sequence is MSNEQGKGMGFFGNKGKPASEKKDEKKTKLDLDYKPDLNPSTPYDPTLPVKATLVNGDKRGTLRIPLETKHEFDALLEISEYQYTYELLGEMLDTWMKKLTPEQLRLFHASLENIKRKAAIKEAKKKK.

The interval 1-50 (MSNEQGKGMGFFGNKGKPASEKKDEKKTKLDLDYKPDLNPSTPYDPTLPV) is disordered. Positions 18 to 36 (PASEKKDEKKTKLDLDYKP) are enriched in basic and acidic residues.

This is an uncharacterized protein from Bacillus anthracis.